The chain runs to 590 residues: Oleate hydratase (590 aa).

The FAD site is built by Ala33, Glu56, Ser64, and Glu82. Glu82 acts as the Proton acceptor in catalysis. Tyr200 (proton donor) is an active-site residue. FAD contacts are provided by Val249, Ser291, Thr508, and Ser512.

The protein belongs to the oleate hydratase family. Monomer and homodimer. Both forms seem to be active. It depends on FAD as a cofactor.

The enzyme catalyses (R)-10-hydroxyoctadecanoate = (9Z)-octadecenoate + H2O. The catalysed reaction is (9Z)-octadecenoate + H2O = 10-hydroxyoctadecanoate. It catalyses the reaction (9Z)-hexadecenoate + H2O = 10-hydroxyhexadecanoate. It carries out the reaction (9Z,12Z)-octadecadienoate + H2O = (12Z)-10-hydroxyoctadecenoate. The enzyme catalyses (12Z)-10-hydroxyoctadecenoate + H2O = 10,13-dihydroxyoctadecanoate. The catalysed reaction is (9Z,12Z,15Z)-octadecatrienoate + H2O = (12Z,15Z)-10-hydroxyoctadecadienoate. The protein operates within lipid metabolism; fatty acid metabolism. Catalyzes the hydration of oleate at its cis-9-double bond to yield 10-hydroxyoctadecanoate, probably in the (R) configuration, and of linoleate at its cis-9- and cis-12-double bond to yield 10-hydroxy-12-octadecenoate and 10,13-dihydroxyoctadecanoate. Is not active on trans-double bonds and esterified fatty acids as substrate; is only active on cis-9- and/or cis-12-double bond of C16 and C18 fatty acids without any trans-configurations, producing 10-hydroxy and 10,13-dihydroxy derivatives. Appears to play a role in oleic acid detoxification and bacterial virulence. In Streptococcus pyogenes serotype M49 (strain NZ131), this protein is Oleate hydratase (sph).